A 366-amino-acid chain; its full sequence is Di-N-acetylchitobiase (366 aa).

A signal peptide spans M1–A22. The GH18 domain occupies G23 to L366. E127 (proton donor) is an active-site residue. 5 N-linked (GlcNAc...) asparagine glycosylation sites follow: N131, N177, N212, N246, and N283.

This sequence belongs to the glycosyl hydrolase 18 family.

The protein localises to the lysosome. In terms of biological role, involved in the degradation of asparagine-linked glycoproteins. Hydrolyze of N-acetyl-beta-D-glucosamine (1-4)N-acetylglucosamine chitobiose core from the reducing end of the bond, it requires prior cleavage by glycosylasparaginase. The protein is Di-N-acetylchitobiase (Ctbs) of Mus musculus (Mouse).